The primary structure comprises 596 residues: Elongation factor 4 (596 aa).

The 183-residue stretch at lysine 2 to glutamate 184 folds into the tr-type G domain. Residues aspartate 14–threonine 19 and asparagine 131–aspartate 134 each bind GTP.

Belongs to the TRAFAC class translation factor GTPase superfamily. Classic translation factor GTPase family. LepA subfamily.

The protein localises to the cell inner membrane. The catalysed reaction is GTP + H2O = GDP + phosphate + H(+). Its function is as follows. Required for accurate and efficient protein synthesis under certain stress conditions. May act as a fidelity factor of the translation reaction, by catalyzing a one-codon backward translocation of tRNAs on improperly translocated ribosomes. Back-translocation proceeds from a post-translocation (POST) complex to a pre-translocation (PRE) complex, thus giving elongation factor G a second chance to translocate the tRNAs correctly. Binds to ribosomes in a GTP-dependent manner. The protein is Elongation factor 4 of Shewanella sediminis (strain HAW-EB3).